The chain runs to 121 residues: Basic phospholipase A2 BmjeTX-I (121 aa).

7 disulfides stabilise this stretch: C26–C114, C28–C45, C44–C95, C50–C121, C51–C88, C58–C82, and C76–C86. Y27, G29, and G31 together coordinate Ca(2+). The active site involves H48. D49 is a binding site for Ca(2+). The active site involves D89.

Requires Ca(2+) as cofactor. Expressed by the venom gland.

It localises to the secreted. The enzyme catalyses a 1,2-diacyl-sn-glycero-3-phosphocholine + H2O = a 1-acyl-sn-glycero-3-phosphocholine + a fatty acid + H(+). Functionally, snake venom phospholipase A2 (PLA2) that induces a slight blockade of neuromuscular contraction in an indirectly stimulated chick biventer cervicis nerve-muscle preparation. Does not inhibit contraction of chick biventer cervicic nerve-muscle preparation in response to treatment with acetylcholine or KCl. The neuromuscular blockade is mediated by inhibitory action at the presynaptic motor nerve endings. Lyses skeletal myoblasts and myotubes in vitro, and intramuscular injection causes local muscle necrosis. Induces edema in the mouse foot pad. Induces a transient increase of IL-6 levels. PLA2 catalyzes the calcium-dependent hydrolysis of the 2-acyl groups in 3-sn-phosphoglycerides. This Bothrops marajoensis (Marajo lancehead) protein is Basic phospholipase A2 BmjeTX-I.